Consider the following 144-residue polypeptide: L-fucose mutarotase (144 aa).

The active-site Proton donor is the histidine 22. Substrate contacts are provided by residues aspartate 30, arginine 109, and 131 to 133 (YGN).

This sequence belongs to the RbsD / FucU family. FucU mutarotase subfamily. As to quaternary structure, homodecamer.

The protein resides in the cytoplasm. It carries out the reaction alpha-L-fucose = beta-L-fucose. Its pathway is carbohydrate metabolism; L-fucose metabolism. Involved in the anomeric conversion of L-fucose. The chain is L-fucose mutarotase from Haemophilus influenzae (strain PittGG).